Here is a 492-residue protein sequence, read N- to C-terminus: Protein GvpD2 (492 aa).

39–46 serves as a coordination point for ATP; sequence GAPGTGKT. Basic and acidic residues predominate over residues 355–368; that stretch reads RDHDDAVDPDRLPG. Residues 355–379 form a disordered region; the sequence is RDHDDAVDPDRLPGHDTTPTEHGTL.

It belongs to the gas vesicle GvpD family. As to quaternary structure, homodimer. Interacts with GvpE, also with GvpE from H.mediterranei.

The protein localises to the cytoplasm. Its function is as follows. Causes a decrease in the amount of GvpE protein. Gas vesicles are hollow, gas filled proteinaceous nanostructures found in several microbial planktonic microorganisms. They allow positioning of halobacteria at the optimal depth for growth in the poorly aerated, shallow brine pools of their habitat. In terms of biological role, expression of 2 c-vac DNA fragments containing 2 divergently transcribed regions (gvpE-gvpF-gvpG-gvpH-gvpI-gvpJ-gvpK-gvpL-gvpM and gvpA-gvpC-gvpN-gvpO) allows H.volcanii to produce gas vesicles. This is Protein GvpD2 from Halobacterium salinarum (strain ATCC 700922 / JCM 11081 / NRC-1) (Halobacterium halobium).